The primary structure comprises 388 residues: Nocturnin (388 aa).

Glu152 contributes to the Mg(2+) binding site. Substrate contacts are provided by residues Glu152, 176–178 (KPW), Asn220, 243–246 (HLKA), 281–283 (DFN), and His371.

It belongs to the CCR4/nocturin family. The cofactor is Mg(2+). As to expression, expressed only in the photoreceptors of the retina. Expression is controlled by the retinal circadian clock.

The protein resides in the cytoplasm. It is found in the nucleus. It localises to the perinuclear region. Its subcellular location is the mitochondrion. The catalysed reaction is NADP(+) + H2O = phosphate + NAD(+). It catalyses the reaction NADPH + H2O = phosphate + NADH. Its function is as follows. Phosphatase which catalyzes the conversion of NADP(+) to NAD(+) and of NADPH to NADH. Shows a small preference for NADPH over NADP(+). Component of the circadian clock or downstream effector of clock function. Exhibits a high amplitude circadian rhythm with maximal levels in early evening. In constant darkness or constant light, the amplitude of the rhythm decreases. This chain is Nocturnin, found in Xenopus laevis (African clawed frog).